The following is a 375-amino-acid chain: Actin, cytoplasmic (375 aa).

This sequence belongs to the actin family.

The protein resides in the cytoplasm. The protein localises to the cytoskeleton. It catalyses the reaction ATP + H2O = ADP + phosphate + H(+). Functionally, actins are highly conserved proteins that are involved in various types of cell motility and are ubiquitously expressed in all eukaryotic cells. The sequence is that of Actin, cytoplasmic (MIC-ACT-1) from Sterkiella nova (Ciliate).